The sequence spans 75 residues: Conotoxin Leo-O3 (75 aa).

The N-terminal stretch at 1–22 (MKLTCVVIVAVLFLTACQLATA) is a signal peptide. A propeptide spanning residues 23 to 42 (DISGGMRKHRALRSTTKLSR) is cleaved from the precursor. Intrachain disulfides connect Cys-47–Cys-60, Cys-54–Cys-63, and Cys-59–Cys-69. A Cysteine amide modification is found at Cys-69. A propeptide spanning residues 70–75 (GSGLHV) is cleaved from the precursor.

The protein belongs to the conotoxin O1 superfamily. Expressed by the venom duct.

It is found in the secreted. This Conus leopardus (Leopard cone) protein is Conotoxin Leo-O3.